The sequence spans 278 residues: Probable cytochrome c oxidase subunit 3 (278 aa).

The next 6 helical transmembrane spans lie at 21 to 41 (PWPI…ISSM), 46 to 66 (FNMY…YSWW), 89 to 109 (IGMV…FASF), 174 to 194 (CVTA…MQVY), 212 to 232 (FYLA…FLIV), and 256 to 276 (AWYW…VYIL).

It belongs to the cytochrome c oxidase subunit 3 family.

It localises to the cell membrane. It carries out the reaction 4 Fe(II)-[cytochrome c] + O2 + 8 H(+)(in) = 4 Fe(III)-[cytochrome c] + 2 H2O + 4 H(+)(out). This Rickettsia prowazekii (strain Madrid E) protein is Probable cytochrome c oxidase subunit 3 (ctaE).